Reading from the N-terminus, the 128-residue chain is L-ectoine synthase (128 aa).

The protein belongs to the ectoine synthase family.

It carries out the reaction (2S)-4-acetamido-2-aminobutanoate = L-ectoine + H2O. It functions in the pathway amine and polyamine biosynthesis; ectoine biosynthesis; L-ectoine from L-aspartate 4-semialdehyde: step 3/3. Functionally, catalyzes the circularization of gamma-N-acetyl-alpha,gamma-diaminobutyric acid (ADABA) to ectoine (1,4,5,6-tetrahydro-2-methyl-4-pyrimidine carboxylic acid), which is an excellent osmoprotectant. This Vibrio parahaemolyticus serotype O3:K6 (strain RIMD 2210633) protein is L-ectoine synthase.